The sequence spans 858 residues: Leucine--tRNA ligase (858 aa).

A 'HIGH' region motif is present at residues 42-52 (PYPSGRLHMGH). The short motif at 618 to 622 (KMSKS) is the 'KMSKS' region element. K621 contacts ATP.

This sequence belongs to the class-I aminoacyl-tRNA synthetase family.

It localises to the cytoplasm. It carries out the reaction tRNA(Leu) + L-leucine + ATP = L-leucyl-tRNA(Leu) + AMP + diphosphate. The polypeptide is Leucine--tRNA ligase (Photobacterium profundum (strain SS9)).